The primary structure comprises 159 residues: uncharacterized protein (159 aa).

2 consecutive transmembrane segments (helical) span residues 59–79 and 91–113; these read IGAL…ALVY and VFSV…RRVC.

It is found in the cell membrane. This is an uncharacterized protein from Treponema pallidum (strain Nichols).